The sequence spans 671 residues: Fusexin 1 (671 aa).

Residues 1 to 12 lie on the Cytoplasmic side of the membrane; that stretch reads MRAVSDFLKNKW. Residues 13–33 traverse the membrane as a helical segment; it reads VAVPAVALLILSLGFLAQNYI. The Extracellular portion of the chain corresponds to 34–574; sequence TGSFVSGDQI…DPFCADGPLE (541 aa). Disulfide bonds link Cys-145-Cys-180, Cys-409-Cys-452, Cys-480-Cys-500, and Cys-513-Cys-528. The fusion loop stretch occupies residues 168 to 173; sequence GAIADY. A helical membrane pass occupies residues 575-595; that stretch reads MLSKMFHLVAGTAVAFFTGSL. Residues 596-628 are Cytoplasmic-facing; it reads GYRAGRWVDGEYQIKGGFDPLKSRSVSRAKRGR. The helical transmembrane segment at 629 to 649 threads the bilayer; it reads FLIGLIAELVSFLLGFYVILL. A topological domain (extracellular) is located at residue Val-650. A helical transmembrane segment spans residues 651–671; sequence PIWAQLMVILGYVLFKYYTPF.

The protein belongs to the HAP2/GCS1 family. Fusexin 1 subfamily. As to quaternary structure, homotrimer stabilized by interdomain contacts and numerous Ca(2+) and Na(+) ions.

Its subcellular location is the cell surface. It localises to the cell membrane. In terms of biological role, exhibits fusogenic activity. Mediates cell-cell fusion in mammalian cells (bilateral fusion). The sequence is that of Fusexin 1 from Natrinema altunense (strain JCM 12890 / CGMCC 1.3731 / AJ2).